Here is a 122-residue protein sequence, read N- to C-terminus: Large ribosomal subunit protein uL14c (122 aa).

Belongs to the universal ribosomal protein uL14 family. Part of the 50S ribosomal subunit.

Its subcellular location is the plastid. Its function is as follows. Binds to 23S rRNA. This Euglena longa (Euglenophycean alga) protein is Large ribosomal subunit protein uL14c.